The sequence spans 357 residues: Glucose 1-dehydrogenase (357 aa).

Aspartate 38 lines the Zn(2+) pocket. Substrate contacts are provided by threonine 40 and histidine 49. Residues histidine 63 and glutamate 64 each contribute to the Zn(2+) site. Residues glutamate 114 and glutamate 150 each coordinate substrate. Glutamate 150 is a Zn(2+) binding site. Residues 181 to 184 (NGSL), 207 to 208 (RR), serine 228, 272 to 274 (LGV), and 301 to 303 (SVN) each bind NADP(+). Asparagine 303 contributes to the substrate binding site.

This sequence belongs to the zinc-containing alcohol dehydrogenase family. Glucose 1-dehydrogenase subfamily. As to quaternary structure, homodimer. The cofactor is Zn(2+).

The catalysed reaction is D-glucose + NAD(+) = D-glucono-1,5-lactone + NADH + H(+). It catalyses the reaction D-glucose + NADP(+) = D-glucono-1,5-lactone + NADPH + H(+). With respect to regulation, activated by molar concentrations of KCl or NaCl. Inhibited by EDTA in vitro. Functionally, catalyzes the NAD(P)(+)-dependent oxidation of D-glucose to D-gluconate. Displays broad substrate specificity since it is able to catalyze the oxidation of a number of alternative aldose sugars, such as D-xylose, D-galactose, and D-fucose, to the corresponding glyconate. Can utilize both NAD(+) and NADP(+) as electron acceptor, with a preference for NADP(+). Physiologically, seems to be involved in the degradation of glucose through a modified Entner-Doudoroff pathway. This is Glucose 1-dehydrogenase from Haloferax mediterranei (strain ATCC 33500 / DSM 1411 / JCM 8866 / NBRC 14739 / NCIMB 2177 / R-4) (Halobacterium mediterranei).